The following is a 305-amino-acid chain: tRNA dimethylallyltransferase (305 aa).

An ATP-binding site is contributed by 8 to 15 (GPTAVGKT). Position 10-15 (10-15 (TAVGKT)) interacts with substrate. An interaction with substrate tRNA region spans residues 33–36 (DSRQ).

Belongs to the IPP transferase family. As to quaternary structure, monomer. Mg(2+) serves as cofactor.

The enzyme catalyses adenosine(37) in tRNA + dimethylallyl diphosphate = N(6)-dimethylallyladenosine(37) in tRNA + diphosphate. Catalyzes the transfer of a dimethylallyl group onto the adenine at position 37 in tRNAs that read codons beginning with uridine, leading to the formation of N6-(dimethylallyl)adenosine (i(6)A). This Thermotoga petrophila (strain ATCC BAA-488 / DSM 13995 / JCM 10881 / RKU-1) protein is tRNA dimethylallyltransferase.